The primary structure comprises 327 residues: Phenylalanine--tRNA ligase alpha subunit (327 aa).

A Mg(2+)-binding site is contributed by Glu-252.

Belongs to the class-II aminoacyl-tRNA synthetase family. Phe-tRNA synthetase alpha subunit type 1 subfamily. In terms of assembly, tetramer of two alpha and two beta subunits. The cofactor is Mg(2+).

Its subcellular location is the cytoplasm. It catalyses the reaction tRNA(Phe) + L-phenylalanine + ATP = L-phenylalanyl-tRNA(Phe) + AMP + diphosphate + H(+). The polypeptide is Phenylalanine--tRNA ligase alpha subunit (Escherichia coli O127:H6 (strain E2348/69 / EPEC)).